A 521-amino-acid chain; its full sequence is Ribonuclease Y (521 aa).

Residues 10 to 30 (LIITAGVSIALAIVAFFLGYL) traverse the membrane as a helical segment. Residues 210–270 (TVSVVTLPND…IRREIAKLTL (61 aa)) enclose the KH domain. The region spanning 336-430 (VLAHSIEVAN…IQAADSVSAA (95 aa)) is the HD domain.

This sequence belongs to the RNase Y family.

It localises to the cell membrane. In terms of biological role, endoribonuclease that initiates mRNA decay. This Caldicellulosiruptor saccharolyticus (strain ATCC 43494 / DSM 8903 / Tp8T 6331) protein is Ribonuclease Y.